Consider the following 459-residue polypeptide: ATP synthase subunit beta (459 aa).

148-155 (GGAGVGKT) is an ATP binding site.

This sequence belongs to the ATPase alpha/beta chains family. In terms of assembly, F-type ATPases have 2 components, CF(1) - the catalytic core - and CF(0) - the membrane proton channel. CF(1) has five subunits: alpha(3), beta(3), gamma(1), delta(1), epsilon(1). CF(0) has three main subunits: a(1), b(2) and c(9-12). The alpha and beta chains form an alternating ring which encloses part of the gamma chain. CF(1) is attached to CF(0) by a central stalk formed by the gamma and epsilon chains, while a peripheral stalk is formed by the delta and b chains.

The protein localises to the cell inner membrane. It carries out the reaction ATP + H2O + 4 H(+)(in) = ADP + phosphate + 5 H(+)(out). Its function is as follows. Produces ATP from ADP in the presence of a proton gradient across the membrane. The catalytic sites are hosted primarily by the beta subunits. The sequence is that of ATP synthase subunit beta from Cellvibrio japonicus (strain Ueda107) (Pseudomonas fluorescens subsp. cellulosa).